A 244-amino-acid polypeptide reads, in one-letter code: Probable transcriptional regulatory protein DR_2548 (244 aa).

Residues 1–23 (MAGHSKWAQIKRKKGANDKKRSA) form a disordered region.

The protein belongs to the TACO1 family.

The protein resides in the cytoplasm. The polypeptide is Probable transcriptional regulatory protein DR_2548 (Deinococcus radiodurans (strain ATCC 13939 / DSM 20539 / JCM 16871 / CCUG 27074 / LMG 4051 / NBRC 15346 / NCIMB 9279 / VKM B-1422 / R1)).